The sequence spans 300 residues: Centromere protein O (300 aa).

Coiled-coil stretches lie at residues 18-42 (LAHL…QSVQ) and 83-109 (NQTV…QAYH). The residue at position 35 (Ser35) is a Phosphoserine.

The protein belongs to the CENP-O/MCM21 family. As to quaternary structure, component of the CENPA-CAD complex, composed of CENPI, CENPK, CENPL, CENPO, CENPP, CENPQ, CENPR and CENPS. The CENPA-CAD complex interacts with the CENPA-NAC complex, at least composed of CENPA, CENPC, CENPH, CENPM, CENPN, CENPT and CENPU.

The protein localises to the nucleus. The protein resides in the chromosome. It localises to the centromere. It is found in the kinetochore. Component of the CENPA-CAD (nucleosome distal) complex, a complex recruited to centromeres which is involved in assembly of kinetochore proteins, mitotic progression and chromosome segregation. May be involved in incorporation of newly synthesized CENPA into centromeres via its interaction with the CENPA-NAC complex. Modulates the kinetochore-bound levels of NDC80 complex. This Homo sapiens (Human) protein is Centromere protein O (CENPO).